Reading from the N-terminus, the 202-residue chain is Imidazoleglycerol-phosphate dehydratase (202 aa).

Belongs to the imidazoleglycerol-phosphate dehydratase family.

It localises to the cytoplasm. It carries out the reaction D-erythro-1-(imidazol-4-yl)glycerol 3-phosphate = 3-(imidazol-4-yl)-2-oxopropyl phosphate + H2O. Its pathway is amino-acid biosynthesis; L-histidine biosynthesis; L-histidine from 5-phospho-alpha-D-ribose 1-diphosphate: step 6/9. This chain is Imidazoleglycerol-phosphate dehydratase, found in Brucella abortus (strain S19).